The following is a 659-amino-acid chain: Sodium/nucleoside cotransporter 2 (659 aa).

Positions 1–10 (MAKSEGRKSA) are enriched in basic and acidic residues. Residues 1 to 22 (MAKSEGRKSASQDTSENGMENP) are disordered. Ser-46 carries the post-translational modification Phosphoserine. 14 helical membrane-spanning segments follow: residues 81 to 101 (ILLG…CILN), 105 to 124 (ALAL…CHFL), 149 to 167 (KRVF…LALD), 173 to 193 (EQLI…ACSK), 201 to 221 (RTVF…IRTE), 234 to 254 (IQIF…DTLV), 261 to 281 (QSLP…YLGL), 296 to 315 (TMGT…FVGM), 337 to 356 (VMTG…FISF), 363 to 382 (LISA…KLVY), 424 to 444 (VAAN…TLSW), 455 to 475 (TFQV…GVQW), 530 to 550 (ATFS…LGGL), and 568 to 588 (ALFT…ILYV).

It belongs to the concentrative nucleoside transporter (CNT) (TC 2.A.41) family. In terms of tissue distribution, expressed in liver (in bile canalicular membrane vesicles (CMV) but not in sinusoidal vesicles), jejunum, spleen and heart. Also expressed in brain and skeletal muscle. Not expressed in kidney, muscle and lung.

Its subcellular location is the membrane. The protein resides in the apicolateral cell membrane. The enzyme catalyses adenosine(out) + Na(+)(out) = adenosine(in) + Na(+)(in). The catalysed reaction is inosine(out) + Na(+)(out) = inosine(in) + Na(+)(in). It carries out the reaction guanosine(out) + Na(+)(out) = guanosine(in) + Na(+)(in). It catalyses the reaction uridine(out) + Na(+)(out) = uridine(in) + Na(+)(in). Inhibited by formycin B, partially inhibited by purine analog ara-A. Its function is as follows. Sodium-dependent and purine-selective. Exhibits the transport characteristics of the nucleoside transport system cif or N1 subtype (N1/cif) (selective for purine nucleosides and uridine). Accepts purine, analogs of purine nucleosides and uridine, and exhibits high affinity for adenosine. May contribute to regulate the transport of organic compounds in testes across the blood-testis-barrier. The sequence is that of Sodium/nucleoside cotransporter 2 (Slc28a2) from Rattus norvegicus (Rat).